Consider the following 273-residue polypeptide: Orotidine 5'-phosphate decarboxylase (273 aa).

Lys-97 (proton donor) is an active-site residue.

Belongs to the OMP decarboxylase family. Type 2 subfamily.

It carries out the reaction orotidine 5'-phosphate + H(+) = UMP + CO2. The protein operates within pyrimidine metabolism; UMP biosynthesis via de novo pathway; UMP from orotate: step 2/2. The protein is Orotidine 5'-phosphate decarboxylase of Cellvibrio japonicus (strain Ueda107) (Pseudomonas fluorescens subsp. cellulosa).